We begin with the raw amino-acid sequence, 370 residues long: Flagellar P-ring protein (370 aa).

The N-terminal stretch at 1–21 is a signal peptide; sequence MKLLLFILMISSIIIVPVGQA.

This sequence belongs to the FlgI family. As to quaternary structure, the basal body constitutes a major portion of the flagellar organelle and consists of four rings (L,P,S, and M) mounted on a central rod.

The protein resides in the periplasm. The protein localises to the bacterial flagellum basal body. Its function is as follows. Assembles around the rod to form the L-ring and probably protects the motor/basal body from shearing forces during rotation. The protein is Flagellar P-ring protein of Pseudoalteromonas atlantica (strain T6c / ATCC BAA-1087).